Reading from the N-terminus, the 211-residue chain is 7-carboxy-7-deazaguanine synthase (211 aa).

Substrate-binding positions include 22–24 (LQG) and R37. The 184-residue stretch at 28–211 (NTGMPSVFVR…LQTHKLIGIE (184 aa)) folds into the Radical SAM core domain. Residues C41, C45, and C48 each coordinate [4Fe-4S] cluster. T50 provides a ligand contact to Mg(2+). T78 serves as a coordination point for substrate. S-adenosyl-L-methionine is bound by residues G80 and 122-124 (SPK).

Belongs to the radical SAM superfamily. 7-carboxy-7-deazaguanine synthase family. Homodimer. [4Fe-4S] cluster serves as cofactor. The cofactor is S-adenosyl-L-methionine. Requires Mg(2+) as cofactor.

The catalysed reaction is 6-carboxy-5,6,7,8-tetrahydropterin + H(+) = 7-carboxy-7-deazaguanine + NH4(+). It participates in purine metabolism; 7-cyano-7-deazaguanine biosynthesis. Functionally, catalyzes the complex heterocyclic radical-mediated conversion of 6-carboxy-5,6,7,8-tetrahydropterin (CPH4) to 7-carboxy-7-deazaguanine (CDG), a step common to the biosynthetic pathways of all 7-deazapurine-containing compounds. In Haemophilus influenzae (strain ATCC 51907 / DSM 11121 / KW20 / Rd), this protein is 7-carboxy-7-deazaguanine synthase.